Consider the following 608-residue polypeptide: MSAPNNNNNNTTTTTTTSPSPSQSSPTLTSVASNSTTTTTTETLTTPKLQFVVRSKTNAYQEIGQQYGKNLNLPSYSNGDCRHVEYSKDGTLIAYVNLNEIVICNSDGGSVHSVINRPNVGMISFSPQNSFLLTWERMSEYNNNENNLIVWDIKQASILYKTSQKYCNQENWPLIKWTDDEVLAGKLISNEVHFFNGRSIGVLAKKIKLQDISSFEFAPATNGGPYKIATFVPEKGSTPGSARIYSYPTVNEYCSHLKFFKASEAKVLWNKKGNAILVHTFTDTDKSGKSYYGETGLWFLSQDGSSFNLNIKGPIHDVQWSPTLDQFMVCYGNMPSQTTLFNLKGEPLVDFGLNPRNTIRFSPNGQLLCLGGFGNLQGDMDFWDLTRYKRICGTQSHCAIYTEWSADSVHFMTAVLSPRIRVDNGVKIIKYDNTIVYQENIPELYQASWRPLNPLVFPNERIVYPSIQQQKESSPQPQKYTPPSLRNMQAAPPVVTSPPAMGAPLPSGFKVYLASAKSSSTFKPKQKPSSTTTTNNTTTTTTKPAADEPKRELTPIEKKIRNVERKLKEVEVLKEKLNSGEFIPPTAIEKINNEQKFLEELRKLQSEL.

The disordered stretch occupies residues 1-42 (MSAPNNNNNNTTTTTTTSPSPSQSSPTLTSVASNSTTTTTTE). 4 WD repeats span residues 115–161 (INRP…ILYK), 207–255 (IKLQ…EYCS), 310–350 (NIKG…PLVD), and 351–393 (FGLN…RICG). Low complexity-rich tracts occupy residues 466–478 (SIQQ…PQPQ) and 520–544 (STFK…TTKP). 2 disordered regions span residues 466–499 (SIQQ…TSPP) and 520–554 (STFK…RELT). A compositionally biased stretch (basic and acidic residues) spans 545 to 554 (AADEPKRELT). Residues 550-608 (KRELTPIEKKIRNVERKLKEVEVLKEKLNSGEFIPPTAIEKINNEQKFLEELRKLQSEL) adopt a coiled-coil conformation.

This sequence belongs to the WD repeat EIF2A family.

Functionally, functions in the early steps of protein synthesis of a small number of specific mRNAs. Acts by directing the binding of methionyl-tRNAi to 40S ribosomal subunits. In contrast to the eIF-2 complex, it binds methionyl-tRNAi to 40S subunits in a codon-dependent manner, whereas the eIF-2 complex binds methionyl-tRNAi to 40S subunits in a GTP-dependent manner. This Dictyostelium discoideum (Social amoeba) protein is Eukaryotic translation initiation factor 2A (eif2a).